The following is a 246-amino-acid chain: tRNA (guanine-N(1)-)-methyltransferase (246 aa).

S-adenosyl-L-methionine is bound by residues Gly113 and 133–138; that span reads IGDYVL.

It belongs to the RNA methyltransferase TrmD family. As to quaternary structure, homodimer.

The protein resides in the cytoplasm. It catalyses the reaction guanosine(37) in tRNA + S-adenosyl-L-methionine = N(1)-methylguanosine(37) in tRNA + S-adenosyl-L-homocysteine + H(+). In terms of biological role, specifically methylates guanosine-37 in various tRNAs. The protein is tRNA (guanine-N(1)-)-methyltransferase of Haemophilus influenzae (strain PittEE).